A 247-amino-acid chain; its full sequence is 1-(5-phosphoribosyl)-5-[(5-phosphoribosylamino)methylideneamino] imidazole-4-carboxamide isomerase (247 aa).

The active-site Proton acceptor is the aspartate 8. The active-site Proton donor is aspartate 130.

It belongs to the HisA/HisF family.

The protein localises to the cytoplasm. The catalysed reaction is 1-(5-phospho-beta-D-ribosyl)-5-[(5-phospho-beta-D-ribosylamino)methylideneamino]imidazole-4-carboxamide = 5-[(5-phospho-1-deoxy-D-ribulos-1-ylimino)methylamino]-1-(5-phospho-beta-D-ribosyl)imidazole-4-carboxamide. The protein operates within amino-acid biosynthesis; L-histidine biosynthesis; L-histidine from 5-phospho-alpha-D-ribose 1-diphosphate: step 4/9. The protein is 1-(5-phosphoribosyl)-5-[(5-phosphoribosylamino)methylideneamino] imidazole-4-carboxamide isomerase of Stutzerimonas stutzeri (strain A1501) (Pseudomonas stutzeri).